Here is a 282-residue protein sequence, read N- to C-terminus: Nucleotide-binding protein Ping_2894 (282 aa).

8–15 (GRSGSGKT) lines the ATP pocket. 56–59 (DIRN) contributes to the GTP binding site.

The protein belongs to the RapZ-like family.

In terms of biological role, displays ATPase and GTPase activities. The polypeptide is Nucleotide-binding protein Ping_2894 (Psychromonas ingrahamii (strain DSM 17664 / CCUG 51855 / 37)).